The chain runs to 1120 residues: MAVKISGVLKDGTGKPVQNCTIQLKAKRNSTTVVVNTLASENPDEAGRYSMDVEYGQYSVILLVEGFPPSHAGTITVYEDSQPGTLNDFLGAMTEDDARPEALRRFELMVEEVARNASAVAQNTAAAKKSASDASTSAREAATHAADAADSARAASTSAGQAASSAQSASSSAGTASTKATEASKSAAAAESSKSAAATSAGAAKTSETNASASLQSAATSASTATTKASEAATSARDAAASKEAAKSSETNASSSASSAASSATAAGNSAKAAKTSETNARSSETAAGQSASAAAGSKTAAASSASAASTSAGQASASATAAGKSAESAASSASTATTKAGEATEQASAAARSASAAKTSETNAKASETSAESSKTAAASSASSAASSASSASASKDEATRQASAAKSSATTASTKATEAAGSATAAAQSKSTAESAATRAETAAKRAEDIASAVALEDASTTKKGIVQLSSATNSTSETLAATPKAVKSAYDNAEKRLQKDQNGADIPDKGCFLNNINAVSKTDFADKRGMRYVRVNAPAGATSGKYYPVVVMRSAGSVSELASRVIITTATRTAGDPMNNCEFNGFVMPGGWTDRGRYAYGMFWQYQNNERAIHSIMMSNKGDDLRSVFYVDGAAFPVFAFIEDGLSISAPGADLVVNDTTYKFGATNPATECIAADVILDFKSGRGFYESHSLIVNDNLSCKKLFATDEIVARGGNQIRMIGGEYGALWRNDGAKTYLLLTNQGDVYGGWNTLRPFAIDNATGELVIGTKLSASLNGNALTATKLQTPRRVSGVEFDGSKDITLTAAHVAAFARRATDTYADADGGVPWNAESGAYNVTRSGDSYILVNFYTGVGSCRTLQMKAHYRNGGLFYRSSRDGYGFEEDWAEVYTSKNLPPESYPVGAPIPWPSDTVPSGYALMQGQAFDKSAYPKLAAAYPSGVIPDMRGWTIKGKPASGRAVLSQEQDGIKSHTHSASASSTDLGTKTTSSFDYGTKSTNNTGAHTHSVSGSTNSAGAHTHSLANVNTASANSGAGSASTRLSVVHNQNYATSSAGAHTHSLSGTAASAGAHAHTVGIGAHTHSVAIGSHGHTITVNAAGNAENTVKNIAFNYIVRLA.

3 disordered regions span residues 129–154, 221–442, and 960–1021; these read KSAS…SARA, SAST…ATRA, and SGRA…AGAH. Composition is skewed to low complexity over residues 221–239, 248–395, and 402–442; these read SAST…ARDA, SSET…SASA, and RQAS…ATRA. The span at 985 to 1021 shows a compositional bias: polar residues; sequence DLGTKTTSSFDYGTKSTNNTGAHTHSVSGSTNSAGAH.

It belongs to the tail fiber family.

The chain is Prophage side tail fiber protein homolog StfR (stfR) from Escherichia coli (strain K12).